The primary structure comprises 580 residues: Probable glucomannan 4-beta-mannosyltransferase 2 (580 aa).

Over residues 1 to 12 the composition is skewed to polar residues; that stretch reads MSTNGGAPSQKR. The tract at residues 1–33 is disordered; the sequence is MSTNGGAPSQKRSWLPSRPLLTTTTQTYPPPLL. Over residues 15–27 the composition is skewed to low complexity; it reads LPSRPLLTTTTQT. The chain crosses the membrane as a helical span at residues 85-105; it reads AVWACLAMSAMLVAEAAWMGL. Asp-182 is an active-site residue. Asp-241 and Asp-243 together coordinate substrate. Asp-335 is a catalytic residue. Helical transmembrane passes span 414 to 434, 437 to 457, 528 to 548, and 554 to 574; these read AIAP…SAMV, VTIP…MNAI, IYIP…YDFV, and YYIY…GFVG.

Belongs to the glycosyltransferase 2 family. Plant cellulose synthase-like A subfamily.

It is found in the golgi apparatus membrane. The catalysed reaction is GDP-mannose + (glucomannan)n = GDP + (glucomannan)n+1.. Functionally, probable mannan synthase which consists of a 4-beta-mannosyltransferase activity on mannan using GDP-mannose. The beta-1,4-mannan product is the backbone for galactomannan synthesis by galactomannan galactosyltransferase. Galactomannan is a noncellulosic polysaccharides of plant cell wall. This Oryza sativa subsp. japonica (Rice) protein is Probable glucomannan 4-beta-mannosyltransferase 2.